Here is a 413-residue protein sequence, read N- to C-terminus: MDPEAFSASLFKWDPRGAMPPPTRLLEAAVAPPPPPPVLPPPQPLSAAYSIRTRELGGLEELFQAYGIRYYTAAKIAELGFTVNTLLDMKDEELDDMMNSLSQIFRWELLVGERYGIKAAIRAERRRLEEEELRRRSHLLSDGGTNALDALSQEGLSEEPVQQQEREAVGSGGGGTTWEVVAAVGGGRMKQRRRKKVVSTGRERRGRASAEEDEETEEGQEDEWNINDAGGGISERQREHPFIVTEPGEVARGKKNGLDYLFHLYEQCRDFLIQVQNIAKERGEKCPTKVTNQVFRYAKKAGASYINKPKMRHYVHCYALHCLDEEASNALRRAFKERGENVGAWRQACYKPLVAIAARQGWDIDTIFNAHPRLAIWYVPTRLRQLCHSERSNAAAAASSSVSGGVGDHLPHF.

Disordered stretches follow at residues 154–177 and 191–239; these read EGLSEEPVQQQEREAVGSGGGGTT and QRRR…RQRE. Basic and acidic residues predominate over residues 201–210; that stretch reads GRERRGRASA. Residues 211 to 225 show a composition bias toward acidic residues; it reads EEDEETEEGQEDEWN. 3 DNA-binding regions span residues 238–242, 307–314, and 378–381; these read REHPF, NKPKMRHY, and YVPT.

This sequence belongs to the FLO/LFY family. As to expression, expressed in floral meristems and in indeterminate vegetative meristems.

It localises to the nucleus. Its function is as follows. Probable transcription factor that act to specify determinacy in the progenitor cells for both flowers and leaves. In Nicotiana tabacum (Common tobacco), this protein is Floricaula/leafy homolog 1 (FL1).